The chain runs to 303 residues: tRNA dimethylallyltransferase (303 aa).

11–18 serves as a coordination point for ATP; the sequence is GPTGVGKS. Residue 13–18 coordinates substrate; that stretch reads TGVGKS. 2 interaction with substrate tRNA regions span residues 36-39 and 159-163; these read DSRQ and QRVLR.

The protein belongs to the IPP transferase family. In terms of assembly, monomer. The cofactor is Mg(2+).

The catalysed reaction is adenosine(37) in tRNA + dimethylallyl diphosphate = N(6)-dimethylallyladenosine(37) in tRNA + diphosphate. Its function is as follows. Catalyzes the transfer of a dimethylallyl group onto the adenine at position 37 in tRNAs that read codons beginning with uridine, leading to the formation of N6-(dimethylallyl)adenosine (i(6)A). The protein is tRNA dimethylallyltransferase of Lawsonia intracellularis (strain PHE/MN1-00).